Here is a 405-residue protein sequence, read N- to C-terminus: Cytoplasmic tRNA 2-thiolation protein 2 (405 aa).

The protein belongs to the CTU2/NCS2 family.

The protein localises to the cytoplasm. It functions in the pathway tRNA modification; 5-methoxycarbonylmethyl-2-thiouridine-tRNA biosynthesis. In terms of biological role, plays a central role in 2-thiolation of mcm(5)S(2)U at tRNA wobble positions of tRNA(Lys), tRNA(Glu) and tRNA(Gln). May act by forming a heterodimer with NCS6/CTU1 that ligates sulfur from thiocarboxylated URM1 onto the uridine of tRNAs at wobble position. This chain is Cytoplasmic tRNA 2-thiolation protein 2, found in Drosophila melanogaster (Fruit fly).